The following is a 123-amino-acid chain: uncharacterized protein (123 aa).

The tract at residues 34-123 is disordered; sequence PEKISQTVKK…MNRDGGVKKE (90 aa). Composition is skewed to basic and acidic residues over residues 50-60, 74-100, and 107-123; these read KKIDENKDKSP, TAKD…EFSQ, and EETR…VKKE.

The protein resides in the mitochondrion. This is an uncharacterized protein from Schizosaccharomyces pombe (strain 972 / ATCC 24843) (Fission yeast).